Reading from the N-terminus, the 361-residue chain is uncharacterized protein (361 aa).

A signal peptide spans Met1 to Cys17. The Extracellular segment spans residues Leu18–Arg47. An N-linked (GlcNAc...) asparagine glycan is attached at Asn24. Residues Leu48–Leu68 traverse the membrane as a helical segment. Residues His69–Asn361 are Cytoplasmic-facing. The span at Ser95–Pro106 shows a compositional bias: polar residues. The segment at Ser95–Lys197 is disordered. Over residues Pro144–Lys158 the composition is skewed to low complexity. A compositionally biased stretch (basic residues) spans His169–Lys185.

The protein resides in the membrane. This is an uncharacterized protein from Bos taurus (Bovine).